We begin with the raw amino-acid sequence, 144 residues long: Granulocyte-macrophage colony-stimulating factor (144 aa).

A signal peptide spans 1-17; the sequence is MWLQNLLLLGTVVCSIS. Ser24 carries an O-linked (GalNAc...) serine glycan. Thr27 carries an O-linked (GalNAc...) threonine glycan. N-linked (GlcNAc...) asparagine glycosylation is found at Asn44, Asn47, and Asn54. Disulfide bonds link Cys71–Cys113 and Cys105–Cys138.

The protein belongs to the GM-CSF family. Monomer. The signaling GM-CSF receptor complex is a dodecamer of two head-to-head hexamers of two alpha, two beta, and two ligand subunits.

Its subcellular location is the secreted. Cytokine that stimulates the growth and differentiation of hematopoietic precursor cells from various lineages, including granulocytes, macrophages, eosinophils and erythrocytes. The protein is Granulocyte-macrophage colony-stimulating factor (CSF2) of Sus scrofa (Pig).